A 1462-amino-acid polypeptide reads, in one-letter code: Gag-Pro-Pol polyprotein (1462 aa).

Glycine 2 is lipidated: N-myristoyl glycine; by host. The interval 93 to 143 is disordered; the sequence is QIPSHPAPPPPSSPTHDPPDSDPQIPPPYVEPTAPQVLPVMHPHGVPPTHR. A Phosphoserine; by host MAPK1 modification is found at serine 105. The short motif at 118 to 121 is the PPXY motif element; it reads PPPY. Positions 124–127 match the PTAP/PSAP motif motif; the sequence is PTAP. 2 consecutive CCHC-type zinc fingers follow at residues 355 to 372 and 378 to 395; these read QPCF…DCAQ and GPCP…DCPR. Positions 476–554 constitute a Peptidase A2 domain; that stretch reads IEALLDTGAD…NNWAIIGRDA (79 aa). Aspartate 481 (for protease activity; shared with dimeric partner) is an active-site residue. Residues 614–804 enclose the Reverse transcriptase domain; the sequence is LEAGHIEPYT…GTIKFLGQII (191 aa). Mg(2+)-binding residues include aspartate 680, aspartate 755, aspartate 756, aspartate 1040, glutamate 1074, aspartate 1096, aspartate 1157, aspartate 1230, and aspartate 1287. The 135-residue stretch at 1031 to 1165 folds into the RNase H type-1 domain; that stretch reads INTAPCLFSD…TDALLITPIL (135 aa). The 170-residue stretch at 1219 to 1388 folds into the Integrase catalytic domain; it reads RGLLPNHIWQ…QPIPETHSLI (170 aa). Residues 1393–1443 constitute a DNA-binding region (integrase-type); that stretch reads HWYYFKLPGLNSRQWKGPQEALQEAAGAALIPVSANSAQWIPWRLLKQAAC.

Homodimer; the homodimers are part of the immature particles. Interacts with human TSG101 and NEDD4; these interactions are essential for budding and release of viral particles. As to quaternary structure, homodimer; further assembles as homohexamers. Mg(2+) is required as a cofactor. Phosphorylation of the matrix protein p19 by MAPK1 seems to play a role in budding. In terms of processing, myristoylated. Myristoylation of the matrix (MA) domain mediates the transport and binding of Gag polyproteins to the host plasma membrane and is required for the assembly of viral particles. Post-translationally, specific enzymatic cleavages by the viral protease yield mature proteins. The polyprotein is cleaved during and after budding, this process is termed maturation. The protease is autoproteolytically processed at its N- and C-termini.

The protein localises to the virion. The enzyme catalyses Endonucleolytic cleavage to 5'-phosphomonoester.. It carries out the reaction DNA(n) + a 2'-deoxyribonucleoside 5'-triphosphate = DNA(n+1) + diphosphate. Functionally, the matrix domain targets Gag, Gag-Pro and Gag-Pro-Pol polyproteins to the plasma membrane via a multipartite membrane binding signal, that includes its myristoylated N-terminus. In terms of biological role, matrix protein. Forms the spherical core of the virus that encapsulates the genomic RNA-nucleocapsid complex. Its function is as follows. Binds strongly to viral nucleic acids and promote their aggregation. Also destabilizes the nucleic acids duplexes via highly structured zinc-binding motifs. Functionally, the aspartyl protease mediates proteolytic cleavages of Gag and Gag-Pol polyproteins during or shortly after the release of the virion from the plasma membrane. Cleavages take place as an ordered, step-wise cascade to yield mature proteins. This process is called maturation. Displays maximal activity during the budding process just prior to particle release from the cell (Potential). Cleaves the translation initiation factor eIF4G leading to the inhibition of host cap-dependent translation. In terms of biological role, RT is a multifunctional enzyme that converts the viral RNA genome into dsDNA in the cytoplasm, shortly after virus entry into the cell. This enzyme displays a DNA polymerase activity that can copy either DNA or RNA templates, and a ribonuclease H (RNase H) activity that cleaves the RNA strand of RNA-DNA heteroduplexes in a partially processive 3' to 5'-endonucleasic mode. Conversion of viral genomic RNA into dsDNA requires many steps. A tRNA-Pro binds to the primer-binding site (PBS) situated at the 5'-end of the viral RNA. RT uses the 3' end of the tRNA primer to perform a short round of RNA-dependent minus-strand DNA synthesis. The reading proceeds through the U5 region and ends after the repeated (R) region which is present at both ends of viral RNA. The portion of the RNA-DNA heteroduplex is digested by the RNase H, resulting in a ssDNA product attached to the tRNA primer. This ssDNA/tRNA hybridizes with the identical R region situated at the 3' end of viral RNA. This template exchange, known as minus-strand DNA strong stop transfer, can be either intra- or intermolecular. RT uses the 3' end of this newly synthesized short ssDNA to perform the RNA-dependent minus-strand DNA synthesis of the whole template. RNase H digests the RNA template except for a polypurine tract (PPT) situated at the 5' end of the genome. It is not clear if both polymerase and RNase H activities are simultaneous. RNase H probably can proceed both in a polymerase-dependent (RNA cut into small fragments by the same RT performing DNA synthesis) and a polymerase-independent mode (cleavage of remaining RNA fragments by free RTs). Secondly, RT performs DNA-directed plus-strand DNA synthesis using the PPT that has not been removed by RNase H as primer. PPT and tRNA primers are then removed by RNase H. The 3' and 5' ssDNA PBS regions hybridize to form a circular dsDNA intermediate. Strand displacement synthesis by RT to the PBS and PPT ends produces a blunt ended, linear dsDNA copy of the viral genome that includes long terminal repeats (LTRs) at both ends. Catalyzes viral DNA integration into the host chromosome, by performing a series of DNA cutting and joining reactions. The sequence is that of Gag-Pro-Pol polyprotein (gag-pro-pol) from Homo sapiens (Human).